The primary structure comprises 257 residues: MTTLIEQLITKMGLREEPNVLEKTTELVRLLELRSTNVPLQINEYGKIVLCADLASCMIGIAFDKEQALKLSGLRKSQYLNNKRMFEKLLDLNKLASVNDICVQLGLNEVARKAEELMTLFKGVAATEDMGTDTSHPQYATMAVFQACRLLKKKVSKSKLMPFSNLRPSQFQLLEQQWERMIAKHHKESKVPSSTDMEGKLKENQNENIKGHEAKKAHKPPPEDYEIWKARMLAKAQAKLKELEASQSHMDSQLLEA.

Residues 186–222 form a disordered region; sequence HKESKVPSSTDMEGKLKENQNENIKGHEAKKAHKPPP. The segment covering 197 to 222 has biased composition (basic and acidic residues); the sequence is MEGKLKENQNENIKGHEAKKAHKPPP.

The protein belongs to the ORC6 family. In terms of assembly, ORC is composed of six subunits.

It is found in the nucleus. Component of the origin recognition complex (ORC) that binds origins of replication. DNA-binding is ATP-dependent, however specific DNA sequences that define origins of replication have not been identified so far. ORC is required to assemble the pre-replication complex necessary to initiate DNA replication. The protein is Origin recognition complex subunit 6 (Orc6) of Drosophila melanogaster (Fruit fly).